Here is a 296-residue protein sequence, read N- to C-terminus: Acetylglutamate kinase (296 aa).

Substrate is bound by residues 66-67 (GG), Arg88, and Asn191.

This sequence belongs to the acetylglutamate kinase family. ArgB subfamily.

The protein localises to the cytoplasm. The catalysed reaction is N-acetyl-L-glutamate + ATP = N-acetyl-L-glutamyl 5-phosphate + ADP. It functions in the pathway amino-acid biosynthesis; L-arginine biosynthesis; N(2)-acetyl-L-ornithine from L-glutamate: step 2/4. In terms of biological role, catalyzes the ATP-dependent phosphorylation of N-acetyl-L-glutamate. This Lawsonia intracellularis (strain PHE/MN1-00) protein is Acetylglutamate kinase.